We begin with the raw amino-acid sequence, 123 residues long: uncharacterized protein (123 aa).

The region spanning 17-117 is the Rhodanese domain; it reads SNDNAFLVDV…NNQDKGWKQN (101 aa).

This is an uncharacterized protein from Rickettsia conorii (strain ATCC VR-613 / Malish 7).